The sequence spans 417 residues: MAESWVIMVTAQTPINIAVIKYWGKRDETLILPINDSIRVSLDPDHLCTTTTVSVRPSFEQDRMWLNGKEISLLGGRFQSCLREIRSRARDLEDEKKGIVIKKMDWEKLHFHIASYNNFPTAAGLASSAAGLACFVFALAKLLTLQEDNGQLSAIARRGSGSACRSLYGGFVKWIMGKEENGSDSIAVQLADEKHWDDLVIVIAVVSARQKETSSTTGMQDSCKTSMLIQHRAKEVVPKRILQMEDAIEKRDFPSFARLACADSNQFHAVCLDTSPPIFYINDTSHKIISCVEKWNRSVGTPQVAYTFDAGPNAVLIARDRKIAALLLRRLLFHFPPHSNTDSNSYVIGDKSILQDVGVQDTKDIESLPPPPEIKDNIPAQKSNGDVSYFICTRPGRGPVLLPDSRALLNPETGLPK.

(R)-5-diphosphomevalonate is bound at residue 22 to 25; sequence YWGK. The short motif at 39–47 is the Peroxisomal targeting signal PTS2 element; the sequence is RVSLDPDHL. (R)-5-diphosphomevalonate-binding positions include R77, 160–165, and T216; that span reads SGSACR.

Belongs to the diphosphomevalonate decarboxylase family. As to quaternary structure, homodimer.

The protein localises to the peroxisome. It carries out the reaction (R)-5-diphosphomevalonate + ATP = isopentenyl diphosphate + ADP + phosphate + CO2. Its pathway is isoprenoid biosynthesis; isopentenyl diphosphate biosynthesis via mevalonate pathway; isopentenyl diphosphate from (R)-mevalonate: step 3/3. Functionally, performs the first committed step in the biosynthesis of isoprene-containing compounds such as sterols and terpenoids. Component of the triterpene saponins (e.g. ginsenosides or panaxosides) and phytosterols biosynthetic pathways. Catalyzes the conversion of mevalonate diphosphate to isopentenyl diphosphate (IPP). The protein is Diphosphomevalonate decarboxylase 1 of Panax ginseng (Korean ginseng).